A 1682-amino-acid chain; its full sequence is Sodium channel protein type 7 subunit alpha (1682 aa).

Residues 1–117 lie on the Cytoplasmic side of the membrane; the sequence is MLASPEPKGL…RRTTIKVLVH (117 aa). The I repeat unit spans residues 100–401; that stretch reads TLSPFNCIRR…ILAMAYEEEK (302 aa). Residues 118-137 traverse the membrane as a helical segment; that stretch reads PFFQLFILISVLIDCVFMSL. Residues 138-141 are Extracellular-facing; that stretch reads TNLP. Residues 142-167 form a helical membrane-spanning segment; the sequence is KWRPVLENTLLGIYTFEILVKLFARG. Residues 168-178 lie on the Cytoplasmic side of the membrane; that stretch reads VWAGSFSFLGD. Residues 179–196 form a helical membrane-spanning segment; sequence PWNWLDFSVTVFEVIIRY. Residues 197-200 lie on the Extracellular side of the membrane; the sequence is SPLD. Residues 201–219 traverse the membrane as a helical segment; sequence FIPTLQTARTLRILKIIPL. The Cytoplasmic portion of the chain corresponds to 220 to 237; it reads NQGLKSLVGVLIHCLKQL. A helical transmembrane segment spans residues 238-259; sequence IGVIILTLFFLSIFSLIGMGLF. The Extracellular portion of the chain corresponds to 260–338; the sequence is MGNLKHKCFR…PDQGFTNFDS (79 aa). Cysteines 267 and 307 form a disulfide. N-linked (GlcNAc...) asparagine glycans are attached at residues Asn276, Asn281, and Asn309. An intramembrane region (pore-forming) is located at residues 339 to 366; it reads FGWALFALFRLMAQDYPEVLYHQILYAS. A topological domain (extracellular) is located at residue Gly367. Residues 368-407 traverse the membrane as a helical segment; it reads KVYMIFFVVVSFLFSFYMASLFLGILAMAYEEEKQRVGEI. The Cytoplasmic segment spans residues 408–505; that stretch reads SKKIEPKFQQ…EFVHRIIMAP (98 aa). At Ser442 the chain carries Phosphoserine; by PKA. Residues 487–758 form an II repeat; it reads CSPCWLKLKE…QLAVARIKKG (272 aa). A helical membrane pass occupies residues 506-521; sequence FTDLFLIICIILNVCF. Over 522 to 530 the chain is Extracellular; that stretch reads LTLEHYPMS. A helical transmembrane segment spans residues 531–559; that stretch reads KQTNTLLNIGNLVFIGIFTAEMIFKIIAM. Residues 560 to 568 lie on the Cytoplasmic side of the membrane; sequence HPYGYFQVG. Residues 569-586 traverse the membrane as a helical segment; it reads WNIFDSMIVFHGLIELCL. Over 587-592 the chain is Extracellular; sequence ANVAGM. The chain crosses the membrane as a helical span at residues 593–609; it reads ALLRLFRMLRIFKLGKY. Topologically, residues 610–626 are cytoplasmic; it reads WPTFQILMWSLSNSWVA. Residues 627 to 655 form a helical membrane-spanning segment; it reads LKDLVLLLFTFIFFSAAFGMKLFGKNYEE. The Extracellular portion of the chain corresponds to 656–673; that stretch reads FVCHIDKDCQLPRWHMHD. Disulfide bonds link Cys658/Cys664 and Cys696/Cys705. The segment at residues 674 to 700 is an intramembrane region (pore-forming); it reads FFHSFLNVFRILCGEWVETLWDCMEVA. A topological domain (extracellular) is located at residue Gly701. The chain crosses the membrane as a helical span at residues 702–732; sequence QSWCIPFYLMVILIGNLLVLYLFLALVSSFS. At 733–934 the chain is on the cytoplasmic side; sequence SCKDVTAEEN…KTCCKIVENN (202 aa). Thr777 is subject to Phosphothreonine; by PKA. The segment at 801–871 is disordered; sequence TQDFLKDKEK…SKEKIKQSSS (71 aa). Over residues 804-819 the composition is skewed to basic and acidic residues; that stretch reads FLKDKEKSSGTEKNAT. Residues 820–834 show a composition bias toward polar residues; that stretch reads ENESQSLIPSPSVSE. Phosphoserine is present on Ser843. 2 positions are modified to phosphoserine; by PKA: Ser869 and Ser905. The stretch at 916-1224 is one III repeat; the sequence is KGKIWQNIRK…RKQYRRLKKL (309 aa). Residues 935 to 953 traverse the membrane as a helical segment; it reads WFKCFIGLVTLLSTGTLAF. At 954-961 the chain is on the extracellular side; that stretch reads EDIYMDQR. The helical transmembrane segment at 962–990 threads the bilayer; it reads KTIKILLEYADMIFTYIFILEMLLKWMAY. Over 991–998 the chain is Cytoplasmic; sequence GFKAYFSN. Residues 999–1020 traverse the membrane as a helical segment; the sequence is GWYRLDFVVVIVFCLSLIGKTR. Residue Glu1021 is a topological domain, extracellular. A helical membrane pass occupies residues 1022-1040; it reads ELKPLISMKFLRPLRVLSQ. At 1041–1055 the chain is on the cytoplasmic side; the sequence is FERMKVVVRALIKTT. Residues 1056–1080 traverse the membrane as a helical segment; that stretch reads LPTLNVFLVCLMIWLIFSIMGVDLF. At 1081-1127 the chain is on the extracellular side; the sequence is AGRFYECIDPTSGERFPSSEVMNKSRCESLLFNESMLWENAKMNFDN. Cys1087 and Cys1107 are oxidised to a cystine. N-linked (GlcNAc...) asparagine glycans are attached at residues Asn1103 and Asn1113. Positions 1128-1154 form an intramembrane region, pore-forming; the sequence is VGNGFLSLLQVATFNGWITIMNSAIDS. The Extracellular portion of the chain corresponds to 1155 to 1167; the sequence is VAVNIQPHFEVNI. The chain crosses the membrane as a helical span at residues 1168-1202; that stretch reads YMYCYFINFIIFGVFLPLSMLITVIIDNFNKHKIK. The Cytoplasmic portion of the chain corresponds to 1203–1250; sequence LGGSNIFITVKQRKQYRRLKKLMYEDSQRPVPRPLNKLQGFIFDVVTS. Residues 1233-1531 form an IV repeat; sequence VPRPLNKLQG…WKRFDPDRTQ (299 aa). Residues 1251–1272 form a helical membrane-spanning segment; sequence QAFNVIVMVLICFQAIAMMIDT. The Extracellular portion of the chain corresponds to 1273 to 1276; it reads DVQS. The helical transmembrane segment at 1277-1305 threads the bilayer; the sequence is LQMSIALYWINSIFVMLYTMECILKLIAF. At 1306-1312 the chain is on the cytoplasmic side; that stretch reads RCFYFTI. The helical transmembrane segment at 1313 to 1338 threads the bilayer; that stretch reads AWNIFDFMVVIFSITGLCLPMTVGSY. Over 1339–1341 the chain is Extracellular; it reads LVP. Residues 1342-1362 traverse the membrane as a helical segment; it reads PSLVQLILLSRIIHMLRLGKG. Topologically, residues 1363–1377 are cytoplasmic; sequence PKVFHNLMLPLMLSL. A helical transmembrane segment spans residues 1378–1402; sequence PALLNIILLIFLVMFIYAVFGMYNF. Residues 1403 to 1420 lie on the Extracellular side of the membrane; it reads AYVKKEAGINDVSNFETF. The segment at residues 1421 to 1444 is an intramembrane region (pore-forming); it reads GNSMLCLFQVAIFAGWDGMLDAIF. Over 1445-1468 the chain is Extracellular; sequence NSKWSDCDPDKINPGTQVRGDCGN. Cys1451 and Cys1466 form a disulfide bridge. A helical transmembrane segment spans residues 1469 to 1504; that stretch reads PSVGIFYFVSYILISWLIIVNMYIVVVMEFLNIASK. Topologically, residues 1505-1682 are cytoplasmic; sequence KKNKTLSEDD…KEKSPIQSQI (178 aa).

The protein belongs to the sodium channel (TC 1.A.1.10) family. SCN7A subfamily. In terms of assembly, the sodium channel formed by SCN7A is probably a heterooligomeric complex consisting of the ion conducting pore forming alpha subunit SCN7A and regulatory beta subunits such as SCN3B. Interacts with ATP1A1; activates ATP1A1 and thereby indirectly signals to nearby neurons to regulate sodium homeostasis. In terms of tissue distribution, heart and uterus.

The protein resides in the cell membrane. The catalysed reaction is Na(+)(in) = Na(+)(out). Sodium leak channel functioning as an osmosensor regulating sodium ion levels in various tissues and organs. While most sodium channels are voltage-gated, SCN7A is not and lets sodium flow through membrane along its concentration gradient. In glial cells of the central nervous system, senses body-fluid sodium levels and controls salt intake behavior as well as voluntary water intake through activation of nearby neurons to maintain appropriate sodium levels in the body. By mediating sodium influx into keratinocytes, also plays a role in skin barrier homeostasis. In Homo sapiens (Human), this protein is Sodium channel protein type 7 subunit alpha.